The following is a 454-amino-acid chain: Nuclear distribution protein PAC1-1 (454 aa).

Residues 9-41 (QAEELHRALIAYLSSNNLTSTAAALRAEIGLGE) form the LisH domain. The disordered stretch occupies residues 71 to 93 (RHTSQLSNATPTSRQNKDPVNWL). Over residues 73–84 (TSQLSNATPTSR) the composition is skewed to polar residues. WD repeat units lie at residues 104–145 (SHRQ…RTIK), 147–187 (HTKT…KNIR), 191–236 (GHDH…CVKT), 239–278 (GHAE…PEPK), 283–342 (GHEH…IKIL), 344–383 (GHDN…RCVK), and 388–450 (AHAH…LNVR).

This sequence belongs to the WD repeat LIS1/nudF family. Self-associates. Interacts with NDL1 and dynein.

It localises to the cytoplasm. The protein resides in the cytoskeleton. It is found in the spindle pole. Functionally, positively regulates the activity of the minus-end directed microtubule motor protein dynein. May enhance dynein-mediated microtubule sliding by targeting dynein to the microtubule plus end. Required for nuclear migration during vegetative growth as well as development. Required for retrograde early endosome (EE) transport from the hyphal tip. Required for localization of dynein to the mitotic spindle poles. Recruits additional proteins to the dynein complex at SPBs. This is Nuclear distribution protein PAC1-1 from Chaetomium globosum (strain ATCC 6205 / CBS 148.51 / DSM 1962 / NBRC 6347 / NRRL 1970) (Soil fungus).